We begin with the raw amino-acid sequence, 270 residues long: Metallo-beta-lactamase type 2 (270 aa).

A signal peptide spans 1-28 (MELPNIMHPVAKLSTALAAALMLSGCMP). Zn(2+)-binding residues include His-120, His-122, Asp-124, His-189, and Cys-208. Lys-211 and Asn-220 together coordinate substrate. His-250 contributes to the Zn(2+) binding site.

It belongs to the metallo-beta-lactamase superfamily. Class-B beta-lactamase family. As to quaternary structure, monomer. The cofactor is Zn(2+).

The protein resides in the periplasm. It carries out the reaction a beta-lactam + H2O = a substituted beta-amino acid. Its activity is regulated as follows. Inhibits by captopril, thiorphan, dimercaprol and tiopronin. This enzyme is not susceptible to inactivation by the beta-lactamase-blocking agents clavulanic acid. In terms of biological role, confers resistance to the different beta-lactams antibiotics (penicillin, cephalosporin and carbapenem) via the hydrolysis of the beta-lactam ring. Does not confer resistance to the polymixin colistin or the fluoroquinolone ciprofloxacin. The protein is Metallo-beta-lactamase type 2 of Klebsiella pneumoniae.